The sequence spans 210 residues: MVESVVKNWQGEQVGQKTFELRVAKETTAAHIVHRALVRQQTNARQGTASTKTRAEVRGGGRKPWRQKGTGRARAGSIRSPLWRGGGVIFGPKPRDFDLKMNRKERRLALRTALVSRIDDLILVEEFSNELSRPKTKDLVAAFTRWGAEPESKILLILSEFPENVYLSARNIENLKLIAADQLNVYDLLHADKIVVTTSALEKIQEVYNG.

The segment covering 41–52 (QTNARQGTASTK) has biased composition (polar residues). The segment at 41–71 (QTNARQGTASTKTRAEVRGGGRKPWRQKGTG) is disordered. Basic residues predominate over residues 60–71 (GGRKPWRQKGTG).

The protein belongs to the universal ribosomal protein uL4 family. Part of the 50S ribosomal subunit.

In terms of biological role, one of the primary rRNA binding proteins, this protein initially binds near the 5'-end of the 23S rRNA. It is important during the early stages of 50S assembly. It makes multiple contacts with different domains of the 23S rRNA in the assembled 50S subunit and ribosome. Its function is as follows. Forms part of the polypeptide exit tunnel. In Trichormus variabilis (strain ATCC 29413 / PCC 7937) (Anabaena variabilis), this protein is Large ribosomal subunit protein uL4.